The sequence spans 301 residues: MYVVAALYHFTRFADPDALRAPLRSIAEAGNVRGSLLLAPEGINGTIAGPRAGIDAVLAHIKGLPGCAGLEWKESTATAAPFGKLKVRLKTEIVSMGAPGLDPADVGTHVAPAEWNALISAPDVAVIDTRNAYEVEIGTFEGAVDPATESFRDFPAWWQANKHRFANQRIAMFCTGGIRCEKSTAYLKEQGVEEVFHLKGGILKYLEDVPEDQSLWQGGCFVFDERVAVGHGLAELPFDLCRACRHPISCEEKADLAFEEGVSCPRCMDVHSDADRARFRERQKQIALAKARGEAHLGAGD.

One can recognise a Rhodanese domain in the interval 120 to 214 (SAPDVAVIDT…YLEDVPEDQS (95 aa)). Catalysis depends on Cys174, which acts as the Cysteine persulfide intermediate.

The protein belongs to the TrhO family.

The catalysed reaction is uridine(34) in tRNA + AH2 + O2 = 5-hydroxyuridine(34) in tRNA + A + H2O. In terms of biological role, catalyzes oxygen-dependent 5-hydroxyuridine (ho5U) modification at position 34 in tRNAs. The polypeptide is tRNA uridine(34) hydroxylase (Jannaschia sp. (strain CCS1)).